A 148-amino-acid polypeptide reads, in one-letter code: Large ribosomal subunit protein uL15 (148 aa).

Positions 1–10 are enriched in basic and acidic residues; that stretch reads MQLHNLEYKK. The disordered stretch occupies residues 1–42; the sequence is MQLHNLEYKKGSRNHKEKRVGRGHGSGLGKTSGRGQDGQKAR. A compositionally biased stretch (basic residues) spans 11–22; the sequence is GSRNHKEKRVGR. Residues 23–36 are compositionally biased toward gly residues; sequence GHGSGLGKTSGRGQ.

It belongs to the universal ribosomal protein uL15 family. In terms of assembly, part of the 50S ribosomal subunit.

Its function is as follows. Binds to the 23S rRNA. This chain is Large ribosomal subunit protein uL15, found in Ureaplasma urealyticum serovar 10 (strain ATCC 33699 / Western).